We begin with the raw amino-acid sequence, 288 residues long: Elongation factor Ts (288 aa).

Residues 79 to 82 (TDFV) are involved in Mg(2+) ion dislocation from EF-Tu.

It belongs to the EF-Ts family.

It is found in the cytoplasm. Associates with the EF-Tu.GDP complex and induces the exchange of GDP to GTP. It remains bound to the aminoacyl-tRNA.EF-Tu.GTP complex up to the GTP hydrolysis stage on the ribosome. The sequence is that of Elongation factor Ts from Ehrlichia chaffeensis (strain ATCC CRL-10679 / Arkansas).